The following is a 543-amino-acid chain: Chaperonin GroEL (543 aa).

Residues 29–32, lysine 50, 86–90, glycine 415, and aspartate 495 each bind ATP; these read TLGP and DGTTT.

This sequence belongs to the chaperonin (HSP60) family. In terms of assembly, forms a cylinder of 14 subunits composed of two heptameric rings stacked back-to-back. Interacts with the co-chaperonin GroES.

It localises to the cytoplasm. It carries out the reaction ATP + H2O + a folded polypeptide = ADP + phosphate + an unfolded polypeptide.. Functionally, together with its co-chaperonin GroES, plays an essential role in assisting protein folding. The GroEL-GroES system forms a nano-cage that allows encapsulation of the non-native substrate proteins and provides a physical environment optimized to promote and accelerate protein folding. This is Chaperonin GroEL from Flavobacterium johnsoniae (strain ATCC 17061 / DSM 2064 / JCM 8514 / BCRC 14874 / CCUG 350202 / NBRC 14942 / NCIMB 11054 / UW101) (Cytophaga johnsonae).